Here is a 1345-residue protein sequence, read N- to C-terminus: Membrane-anchored lipid-binding protein LAM4 (1345 aa).

Over 1 to 1197 (MTRDSKKKHH…NFSSEIFMNK (1197 aa)) the chain is Cytoplasmic. 7 disordered regions span residues 51 to 80 (RVGGNPDIPSLLKPETFTESPAKGSQKAAA), 115 to 134 (SLKGRFQDGNSNSNSVPSLS), 139 to 164 (EKEKLQSGKREGSSNQAEEKTPDGHD), 190 to 302 (DADN…SLDD), 356 to 397 (LPEA…KPRR), 425 to 447 (SFNSSNGLTNNDPEYEDREPREM), and 489 to 531 (STII…NGRQ). Position 66 is a phosphothreonine (threonine 66). A compositionally biased stretch (low complexity) spans 216–228 (SENSTNNKNTSST). The span at 246 to 271 (SKSSTPSNQQLNTTEAGSKSKPSSLS) shows a compositional bias: polar residues. A compositionally biased stretch (low complexity) spans 283–294 (HSNSHSSSNAIS). Residues 425–436 (SFNSSNGLTNND) show a composition bias toward polar residues. Over residues 498-516 (SNGRPSSGLRRSSSKSFSS) the composition is skewed to low complexity. Positions 549-616 (EFHAIFKDSG…FKTIVQIEKR (68 aa)) constitute a GRAM domain. Over residues 665–677 (SNSNNTNSSSNSI) the composition is skewed to low complexity. The interval 665–722 (SNSNNTNSSSNSISDDENDDYDDDYDDYGDDDDDLYDNSNNISDSTDMTSSVSIGKPE) is disordered. A compositionally biased stretch (acidic residues) spans 678–700 (SDDENDDYDDDYDDYGDDDDDLY). Position 747 is a phosphoserine (serine 747). VASt domains are found at residues 758–930 (NEKL…TRSA) and 967–1139 (DDSI…SRAK). The interval 930-963 (ATKRKRSSKENTVTVSTLPKMEPSSHAPTEPDIQ) is disordered. Residues 1141 to 1158 (KKPVKKVMKSHDKHRPFH) show a composition bias toward basic residues. A disordered region spans residues 1141–1172 (KKPVKKVMKSHDKHRPFHSKVEQKSSESRKSD). Over residues 1159 to 1172 (SKVEQKSSESRKSD) the composition is skewed to basic and acidic residues. The chain crosses the membrane as a helical span at residues 1198–1218 (LLSPQKLFLILGLTIMLFWSP). The Lumenal segment spans residues 1219-1345 (RLHVFQEKNN…NIERDANDLS (127 aa)).

It belongs to the YSP2 family.

Its subcellular location is the endoplasmic reticulum membrane. In terms of biological role, may be involved in sterol transfer between intracellular membranes. This chain is Membrane-anchored lipid-binding protein LAM4, found in Saccharomyces cerevisiae (strain ATCC 204508 / S288c) (Baker's yeast).